Here is a 149-residue protein sequence, read N- to C-terminus: Protein NrdI (149 aa).

Belongs to the NrdI family.

Its function is as follows. Probably involved in ribonucleotide reductase function. The chain is Protein NrdI from Malacoplasma penetrans (strain HF-2) (Mycoplasma penetrans).